We begin with the raw amino-acid sequence, 952 residues long: Eukaryotic translation initiation factor 3 subunit A (952 aa).

Positions 315 to 491 constitute a PCI domain; sequence HAERAGIVND…QTITFVSTPP (177 aa). Residues 522–849 adopt a coiled-coil conformation; that stretch reads DAFAAAIAQA…RRQAEKAAAT (328 aa). Basic and acidic residues predominate over residues 757 to 797; the sequence is EKVIKRKREEKERKLKEAREAEERKRKEEEEAAQKAEEEAR. The interval 757–952 is disordered; sequence EKVIKRKREE…RGMPSTRGGA (196 aa). The span at 798–809 shows a compositional bias: low complexity; sequence AAAALEAEAAAA. Over residues 810–844 the composition is skewed to basic and acidic residues; sequence EQRRAEREAQRQSDLERIRAQQEREEEALRRRQAE. 2 stretches are compositionally biased toward low complexity: residues 856-878 and 893-918; these read RPPA…GGPS and GAPV…SNGP.

This sequence belongs to the eIF-3 subunit A family. In terms of assembly, component of the eukaryotic translation initiation factor 3 (eIF-3) complex.

The protein localises to the cytoplasm. In terms of biological role, RNA-binding component of the eukaryotic translation initiation factor 3 (eIF-3) complex, which is involved in protein synthesis of a specialized repertoire of mRNAs and, together with other initiation factors, stimulates binding of mRNA and methionyl-tRNAi to the 40S ribosome. The eIF-3 complex specifically targets and initiates translation of a subset of mRNAs involved in cell proliferation. The polypeptide is Eukaryotic translation initiation factor 3 subunit A (Cryptococcus neoformans var. neoformans serotype D (strain B-3501A) (Filobasidiella neoformans)).